The chain runs to 709 residues: Polyribonucleotide nucleotidyltransferase (709 aa).

Positions 485 and 491 each coordinate Mg(2+). The region spanning 552 to 611 (PRIYTMKIDPKKIKDVIGKGGATIRSLTEETGTSIDIDDDGTVKIAAVDSNAAKNVMGRI) is the KH domain. In terms of domain architecture, S1 motif spans 621-689 (GAIYKGKVTR…RQGRIRLTMK (69 aa)).

This sequence belongs to the polyribonucleotide nucleotidyltransferase family. In terms of assembly, component of the RNA degradosome, which is a multiprotein complex involved in RNA processing and mRNA degradation. Mg(2+) serves as cofactor.

It localises to the cytoplasm. The catalysed reaction is RNA(n+1) + phosphate = RNA(n) + a ribonucleoside 5'-diphosphate. Involved in mRNA degradation. Catalyzes the phosphorolysis of single-stranded polyribonucleotides processively in the 3'- to 5'-direction. The chain is Polyribonucleotide nucleotidyltransferase from Haemophilus influenzae (strain 86-028NP).